The following is a 1184-amino-acid chain: Non-receptor tyrosine-protein kinase TYK2 (1184 aa).

Residues 33–430 (LMVLLHWPGP…GYFRLTADSS (398 aa)) form the FERM domain. The interval 294–368 (CYIQNSGQTA…KAGEHLTESP (75 aa)) is disordered. Position 295 is a phosphotyrosine (tyrosine 295). The region spanning 449–529 (GIHGPLMDPF…GRSFASLGDL (81 aa)) is the SH2; atypical domain. Phosphoserine is present on serine 525. The region spanning 589 to 866 (ITQLSHLGQG…RTILRDLTRL (278 aa)) is the Protein kinase 1 domain. At tyrosine 604 the chain carries Phosphotyrosine. Serine 881 is modified (phosphoserine). The region spanning 894–1166 (LKKIRDLGEG…PTFQNLVPIL (273 aa)) is the Protein kinase 2 domain. ATP contacts are provided by residues 900 to 908 (LGEGHFGKV) and lysine 927. Aspartate 1020 serves as the catalytic Proton acceptor. Residue tyrosine 1051 is modified to Phosphotyrosine; by autocatalysis. Phosphotyrosine is present on tyrosine 1052.

It belongs to the protein kinase superfamily. Tyr protein kinase family. JAK subfamily. Interacts (via FERM domain) with JAKMIP1. Interacts with PIK3R1; this interaction is important for cell migration. Interacts with MPL/TPOR. In terms of processing, phosphorylation by JAK1 at Tyr-1051 and Tyr-1052 induces kinase activation.

It catalyses the reaction L-tyrosyl-[protein] + ATP = O-phospho-L-tyrosyl-[protein] + ADP + H(+). With respect to regulation, the protein kinase 1 domain (also termed pseudokinase domain) mediates autoinhibition of the TYK2 kinase domain. In terms of biological role, tyrosine kinase of the non-receptor type involved in numerous cytokines and interferons signaling, which regulates cell growth, development, cell migration, innate and adaptive immunity. Plays both structural and catalytic roles in numerous interleukins and interferons (IFN-alpha/beta) signaling. Associates with heterodimeric cytokine receptor complexes and activates STAT family members including STAT1, STAT3, STAT4 or STAT6. The heterodimeric cytokine receptor complexes are composed of (1) a TYK2-associated receptor chain (IFNAR1, IL12RB1, IL10RB or IL13RA1), and (2) a second receptor chain associated either with JAK1 or JAK2. In response to cytokine-binding to receptors, phosphorylates and activates receptors (IFNAR1, IL12RB1, IL10RB or IL13RA1), creating docking sites for STAT members. In turn, recruited STATs are phosphorylated by TYK2 (or JAK1/JAK2 on the second receptor chain), form homo- and heterodimers, translocate to the nucleus, and regulate cytokine/growth factor responsive genes. Negatively regulates STAT3 activity by promototing phosphorylation at a specific tyrosine that differs from the site used for signaling. The sequence is that of Non-receptor tyrosine-protein kinase TYK2 from Mus musculus (Mouse).